The sequence spans 146 residues: Large ribosomal subunit protein uL15 (146 aa).

The interval 1–65 (MSDIQLNSLK…GQMPLQRRLP (65 aa)) is disordered. Residues 24 to 34 (RGIGSGLGKTA) show a composition bias toward gly residues.

Belongs to the universal ribosomal protein uL15 family. In terms of assembly, part of the 50S ribosomal subunit.

In terms of biological role, binds to the 23S rRNA. The sequence is that of Large ribosomal subunit protein uL15 from Bordetella avium (strain 197N).